A 485-amino-acid polypeptide reads, in one-letter code: Sperm-associated antigen 8 (485 aa).

Disordered stretches follow at residues 1–42 (METN…SPRS), 75–98 (KTPA…EPCA), and 127–215 (TTTD…CIPP). Residues 132–150 (SSNPGPVPGSSSGPVLGSS) are compositionally biased toward low complexity. Gly residues predominate over residues 151–191 (SGAGHGSGSGSGPGCGSVPGSGSGPGPGSGPGSGPGHGSGS). Mn regions lie at residues 327 to 340 (SSTT…PPGN) and 379 to 393 (ESVT…LAQA).

Belongs to the SPAG8 family. As to quaternary structure, microtubule inner protein component of sperm flagellar doublet microtubules. Interacts with FHL5 (via second LIM domain). Interacts with RANBP9. Expressed in testis (germ cells), but not in liver, kidney, prostate and small intestine. Expressed in airway epithelial cells.

The protein resides in the cytoplasm. Its subcellular location is the nucleus. It is found in the cytoplasmic vesicle. The protein localises to the secretory vesicle. It localises to the acrosome. The protein resides in the cytoskeleton. Its subcellular location is the microtubule organizing center. It is found in the spindle. The protein localises to the cilium axoneme. It localises to the flagellum axoneme. Functionally, microtubule inner protein (MIP) part of the dynein-decorated doublet microtubules (DMTs) in cilia axoneme, which is required for motile cilia beating. Plays a role in spermatogenesis by enhancing the binding of CREM isoform tau to its coactivator FHL5 and increasing the FHL5-regulated transcriptional activation of CREM isoform tau. Involved in the acrosome reaction and in binding of sperm to the zona pellucida. Plays a role in regulation of the cell cycle by controlling progression through the G2/M phase, possibly by delaying the activation of CDK1 which is required for entry into mitosis. May play a role in fertility and microtubule formation through interaction with RANBP9. The protein is Sperm-associated antigen 8 of Homo sapiens (Human).